A 212-amino-acid polypeptide reads, in one-letter code: Ras-related protein Rab-2A (212 aa).

Alanine 2 is modified (N-acetylalanine). A required for interaction with PRKCI region spans residues 2 to 19; the sequence is AYAYLFKYIIIGDTGVGK. GTP-binding residues include glycine 16, valine 17, glycine 18, lysine 19, serine 20, cysteine 21, and threonine 38. Position 20 (serine 20) interacts with Mg(2+). Positions 37–42 match the Switch 1 motif; the sequence is LTMGVE. Mg(2+) contacts are provided by threonine 38 and aspartate 61. The Switch 2 signature appears at 63-72; it reads AGQESFRSIT. The GTP site is built by glycine 64, asparagine 119, lysine 120, aspartate 122, alanine 150, and lysine 151. Positions 190-212 are disordered; that stretch reads QHAATNASHGGNQGGQQAGGGCC. Residues 200–212 show a composition bias toward gly residues; the sequence is GNQGGQQAGGGCC. 2 S-geranylgeranyl cysteine lipidation sites follow: cysteine 211 and cysteine 212.

The protein belongs to the small GTPase superfamily. Rab family. In terms of assembly, interacts with PRKCI. Interacts with TRIP11. Interacts (in GTP-bound form) with GARIN1B. Interacts (GTP-bound) with HOPS complex component VPS39; interaction contributes to obtaining a functional HOPS complex that promotes autophagosome-lysosome membrane fusion driven by STX17-SNAP29-VAMP8. May interact with VPS41. The cofactor is Mg(2+). Prenylated. Prenylation is required for association with cellular membranes.

It is found in the endoplasmic reticulum-Golgi intermediate compartment membrane. The protein localises to the melanosome. It localises to the endoplasmic reticulum membrane. Its subcellular location is the golgi apparatus membrane. The protein resides in the cytoplasmic vesicle. It is found in the secretory vesicle. The protein localises to the acrosome. It localises to the autophagosome membrane. It carries out the reaction GTP + H2O = GDP + phosphate + H(+). Regulated by guanine nucleotide exchange factors (GEFs) which promote the exchange of bound GDP for free GTP, GTPase activating proteins (GAPs) which increase the GTP hydrolysis activity, and GDP dissociation inhibitors (GDIs) which inhibit the dissociation of the nucleotide from the GTPase. In terms of biological role, the small GTPases Rab are key regulators of intracellular membrane trafficking, from the formation of transport vesicles to their fusion with membranes. Rabs cycle between active GTP-bound and inactive GDP-bound states. In their active state, drive transport of vesicular carriers from donor organelles to acceptor organelles to regulate the membrane traffic that maintains organelle identity and morphology. RAB2A regulates autophagy by promoting autophagosome-lysosome fusion via recruitment of the HOPS endosomal tethering complex; this process involves autophagosomal RAB2A and lysosomal RAB39A recruitment of HOPS subcomplexes VPS39-VPS11 and VPS41-VPS16-VPS18-VPS33A, respectively, which assemble into a functional complex to mediate membrane tethering and SNAREs-driven membrane fusion. Required for protein transport from the endoplasmic reticulum to the Golgi complex. Regulates the compacted morphology of the Golgi. Together with RAB2B, redundantly required for efficient autophagic flux. The sequence is that of Ras-related protein Rab-2A (Rab2a) from Rattus norvegicus (Rat).